The sequence spans 379 residues: Transcription termination factor 1a, mitochondrial (379 aa).

The N-terminal 37 residues, methionine 1–proline 37, are a transit peptide targeting the mitochondrion. Interaction with DNA regions lie at residues arginine 151–serine 152, glutamine 229–arginine 233, serine 306–lysine 313, serine 337–threonine 340, and serine 366–lysine 373.

This sequence belongs to the mTERF family. As to quaternary structure, monomer. Post-translationally, phosphoprotein with mostly four phosphate groups. While the DNA-binding activity is unaffected by the phosphorylation state, only the phosphorylated form of the protein is active for termination activity. Functioning seems to be regulated by phosphorylation. Predominantly expressed in heart and liver, with extremely low levels in other tissues. Expressed strongly in the heart and at lower levels in brain, liver and kidney.

It is found in the mitochondrion. In terms of biological role, transcription termination factor. Binds to a 28 bp region within the tRNA(Leu(uur)) gene at a position immediately adjacent to and downstream of the 16S rRNA gene; this region comprises a tridecamer sequence critical for directing accurate termination. Binds DNA along the major grove and promotes DNA bending and partial unwinding. Promotes base flipping. Transcription termination activity appears to be polarized with highest specificity for transcripts initiated on the light strand. The polypeptide is Transcription termination factor 1a, mitochondrial (Mterf1a) (Mus musculus (Mouse)).